Consider the following 150-residue polypeptide: Ribosomal RNA large subunit methyltransferase H (150 aa).

S-adenosyl-L-methionine is bound by residues I71, A100, and L118–F123.

Belongs to the RNA methyltransferase RlmH family. In terms of assembly, homodimer.

It is found in the cytoplasm. It catalyses the reaction pseudouridine(1915) in 23S rRNA + S-adenosyl-L-methionine = N(3)-methylpseudouridine(1915) in 23S rRNA + S-adenosyl-L-homocysteine + H(+). Functionally, specifically methylates the pseudouridine at position 1915 (m3Psi1915) in 23S rRNA. The chain is Ribosomal RNA large subunit methyltransferase H from Helicobacter acinonychis (strain Sheeba).